Here is a 500-residue protein sequence, read N- to C-terminus: NAD(P)H-quinone oxidoreductase chain 4, chloroplastic (500 aa).

The next 14 helical transmembrane spans lie at 4–24, 35–55, 87–107, 113–130, 134–154, 167–187, 208–228, 242–262, 274–294, 305–325, 330–350, 386–406, 416–436, and 463–483; these read FPWL…IFFL, YTMG…CYHF, IGPI…AWPV, LFHF…GLFS, LLLF…LLSM, FILY…GMGL, GLEI…LPII, HYST…YGLI, SIFS…AALT, IAYS…SLTN, GAIL…FLGG, LALP…GIIT, IIIT…LLSM, and FVSI…DLVI.

The protein belongs to the complex I subunit 4 family.

The protein localises to the plastid. It localises to the chloroplast thylakoid membrane. It catalyses the reaction a plastoquinone + NADH + (n+1) H(+)(in) = a plastoquinol + NAD(+) + n H(+)(out). It carries out the reaction a plastoquinone + NADPH + (n+1) H(+)(in) = a plastoquinol + NADP(+) + n H(+)(out). This is NAD(P)H-quinone oxidoreductase chain 4, chloroplastic from Lemna minor (Common duckweed).